The chain runs to 675 residues: Sodium/myo-inositol cotransporter 2 (675 aa).

The Extracellular portion of the chain corresponds to 1 to 27; that stretch reads MESGTSSPQPPQLDPLDAFPQKGLEPG. A helical transmembrane segment spans residues 28–48; sequence DIAVLVLYFLFVLAVGLWSTV. Residues 49 to 65 lie on the Cytoplasmic side of the membrane; that stretch reads KTKRDTVKGYFLAGGDM. A helical transmembrane segment spans residues 66–88; the sequence is VWWPVGASLFASNVGSGHFIGLA. Residues 89-102 are Extracellular-facing; that stretch reads GSGAATGISVSAYE. Residues 103–123 form a helical membrane-spanning segment; the sequence is LNGLFSVLMLAWIFLPIYIAG. The Cytoplasmic segment spans residues 124–135; the sequence is QVTTMPEYLRKR. A helical membrane pass occupies residues 136 to 156; the sequence is FGGIRIPIILAVLYLFIYIFT. Residues 157-180 are Extracellular-facing; it reads KISVDMYAGAIFIQQSLHLDLYLA. Residues 181 to 201 form a helical membrane-spanning segment; the sequence is IVGLLAITAVYTVAGGLAAVI. Topologically, residues 202–208 are cytoplasmic; it reads YTDALQT. A helical transmembrane segment spans residues 209 to 229; it reads LIMLIGALTLMGYSFAAVGGM. The Extracellular segment spans residues 230–272; the sequence is EGLKEKYFLALASNRSENSSCGLPREDAFHIFRDPLTSDLPWP. Residues 273-293 traverse the membrane as a helical segment; sequence GVLFGMSIPSLWYWCTDQVIV. Over 294-308 the chain is Cytoplasmic; it reads QRTLAAKNLSHAKGG. A helical membrane pass occupies residues 309-329; sequence ALMAAYLKVLPLFIMVFPGMV. Residues 330 to 375 are Extracellular-facing; that stretch reads SRILFPDQVACADPEICQKICSNPSGCSDIAYPKLVLELLPTGLRG. A helical transmembrane segment spans residues 376 to 396; that stretch reads LMMAVMVAALMSSLTSIFNSA. At 397–418 the chain is on the cytoplasmic side; sequence STIFTMDLWNHLRPRASEKELM. A helical membrane pass occupies residues 419 to 439; the sequence is IVGRVFVLLLVLVSILWIPVV. Residues 440–446 lie on the Extracellular side of the membrane; the sequence is QASQGGQ. The chain crosses the membrane as a helical span at residues 447–467; the sequence is LFIYIQSISSYLQPPVAVVFI. Residues 468–479 lie on the Cytoplasmic side of the membrane; that stretch reads MGCFWKRTNEKG. The chain crosses the membrane as a helical span at residues 480-500; that stretch reads AFWGLISGLLLGLVRLVLDFI. The Extracellular portion of the chain corresponds to 501-521; sequence YVQPRCDQPDERPVLVKSIHY. The chain crosses the membrane as a helical span at residues 522–542; sequence LYFSMILSTVTLITVSTVSWF. The Cytoplasmic segment spans residues 543–654; the sequence is TEPPSKEMVS…SLEENPLVKT (112 aa). Residues 655–675 traverse the membrane as a helical segment; that stretch reads LLDVNLIFCVSCAIFIWGYFA.

The protein belongs to the sodium:solute symporter (SSF) (TC 2.A.21) family. As to expression, highest expression in heart, skeletal muscle, kidney, liver and placenta. Weaker expression in brain, colon, spleen, lung and peripheral blood leukocytes.

The protein localises to the membrane. Its subcellular location is the apical cell membrane. The catalysed reaction is myo-inositol(out) + 2 Na(+)(out) = myo-inositol(in) + 2 Na(+)(in). It carries out the reaction 1D-chiro-inositol(out) + 2 Na(+)(out) = 1D-chiro-inositol(in) + 2 Na(+)(in). The enzyme catalyses D-glucose(out) + 2 Na(+)(out) = D-glucose(in) + 2 Na(+)(in). It catalyses the reaction D-xylose(out) + 2 Na(+)(out) = D-xylose(in) + 2 Na(+)(in). Its activity is regulated as follows. MI transport activity inhibited by D-chiro-inositol (DCI), phlorizin (Pz) and sodium (Na(+)). Insulin increases D-chiro-inositol uptake. Its function is as follows. Involved in the sodium-dependent cotransport of myo-inositol (MI) with a Na(+):MI stoichiometry of 2:1. Exclusively responsible for apical MI transport and absorption in intestine. Can also transport D-chiro-inositol (DCI) but not L-fucose. Exhibits stereospecific cotransport of both D-glucose and D-xylose. May induce apoptosis through the TNF-alpha, PDCD1 pathway. May play a role in the regulation of MI concentration in serum, involving reabsorption in at least the proximal tubule of the kidney. The protein is Sodium/myo-inositol cotransporter 2 of Homo sapiens (Human).